A 317-amino-acid chain; its full sequence is Beta-ketoacyl-[acyl-carrier-protein] synthase III (317 aa).

Catalysis depends on residues C112 and H244. Positions Q245–R249 are ACP-binding. N274 is an active-site residue.

This sequence belongs to the thiolase-like superfamily. FabH family. In terms of assembly, homodimer.

It is found in the cytoplasm. It carries out the reaction malonyl-[ACP] + acetyl-CoA + H(+) = 3-oxobutanoyl-[ACP] + CO2 + CoA. It participates in lipid metabolism; fatty acid biosynthesis. Functionally, catalyzes the condensation reaction of fatty acid synthesis by the addition to an acyl acceptor of two carbons from malonyl-ACP. Catalyzes the first condensation reaction which initiates fatty acid synthesis and may therefore play a role in governing the total rate of fatty acid production. Possesses both acetoacetyl-ACP synthase and acetyl transacylase activities. Its substrate specificity determines the biosynthesis of branched-chain and/or straight-chain of fatty acids. This is Beta-ketoacyl-[acyl-carrier-protein] synthase III from Citrobacter koseri (strain ATCC BAA-895 / CDC 4225-83 / SGSC4696).